The following is a 381-amino-acid chain: Glucose-1-phosphate adenylyltransferase (381 aa).

Alpha-D-glucose 1-phosphate is bound by residues tyrosine 100, glycine 165, 180–181 (EK), and serine 191.

It belongs to the bacterial/plant glucose-1-phosphate adenylyltransferase family. Homotetramer.

The catalysed reaction is alpha-D-glucose 1-phosphate + ATP + H(+) = ADP-alpha-D-glucose + diphosphate. The protein operates within glycan biosynthesis; glycogen biosynthesis. Functionally, involved in the biosynthesis of ADP-glucose, a building block required for the elongation reactions to produce glycogen. Catalyzes the reaction between ATP and alpha-D-glucose 1-phosphate (G1P) to produce pyrophosphate and ADP-Glc. In Mycoplasma mobile (strain ATCC 43663 / 163K / NCTC 11711) (Mesomycoplasma mobile), this protein is Glucose-1-phosphate adenylyltransferase.